A 230-amino-acid chain; its full sequence is Demethylmenaquinone methyltransferase (230 aa).

S-adenosyl-L-methionine is bound by residues Thr62, Asp80, 100–101 (DA), and Ser117.

Belongs to the class I-like SAM-binding methyltransferase superfamily. MenG/UbiE family.

It catalyses the reaction a 2-demethylmenaquinol + S-adenosyl-L-methionine = a menaquinol + S-adenosyl-L-homocysteine + H(+). It participates in quinol/quinone metabolism; menaquinone biosynthesis; menaquinol from 1,4-dihydroxy-2-naphthoate: step 2/2. In terms of biological role, methyltransferase required for the conversion of demethylmenaquinol (DMKH2) to menaquinol (MKH2). This chain is Demethylmenaquinone methyltransferase, found in Mycobacterium sp. (strain JLS).